The primary structure comprises 358 residues: NAC domain-containing protein 12 (358 aa).

Residues 16–177 (VPPGFRFHPT…GWVVCRVFRK (162 aa)) enclose the NAC domain. The DNA-binding element occupies 116 to 183 (IGLRKTLVFY…VFRKKNYQKI (68 aa)).

As to expression, stems and roots, specifically in interfascicular fibers (sclerenchyma), cells differentiating into vascular vessels (cambium), and xylem.

The protein localises to the nucleus. Transcriptional activator of genes involved in biosynthesis of secondary walls. Together with NST1, required for the secondary cell wall thickening and lignification of sclerenchymatous fibers and secondary xylem vessels (tracheary elements). Seems to repress the secondary cell wall thickening of xylary fibers. May also regulate the secondary cell wall lignification of other tissues. Binds to and activates the promoter of MYB46. This Arabidopsis thaliana (Mouse-ear cress) protein is NAC domain-containing protein 12.